The primary structure comprises 324 residues: PTS system glucose-specific EIICBA component (324 aa).

The region spanning 1–63 (HLLNVKIGMT…KWDLATPGRE (63 aa)) is the PTS EIIC type-1 domain. Helical transmembrane passes span 5–25 (VKIGMTFSGGVIDFLLFGVLP) and 28–48 (TAWWLVIPVGLVFAVIYYFGF). One can recognise a PTS EIIB type-1 domain in the interval 78–159 (GDLPYEVLAA…QDIMQGKAPA (82 aa)). The active-site Phosphocysteine intermediate; for EIIB activity is the Cys100. A disordered region spans residues 156–177 (KAPARAEEKPKTAASEAAESET). The span at 167 to 177 (TAASEAAESET) shows a compositional bias: low complexity. In terms of domain architecture, PTS EIIA type-1 spans 194-298 (DQVFSQKMMG…SIVTPVIFTN (105 aa)). His246 (tele-phosphohistidine intermediate; for EIIA activity) is an active-site residue.

Its subcellular location is the cell membrane. The catalysed reaction is N(pros)-phospho-L-histidyl-[protein] + D-glucose(out) = D-glucose 6-phosphate(in) + L-histidyl-[protein]. In terms of biological role, the phosphoenolpyruvate-dependent sugar phosphotransferase system (sugar PTS), a major carbohydrate active transport system, catalyzes the phosphorylation of incoming sugar substrates concomitantly with their translocation across the cell membrane. This system is involved in glucose transport. In Geobacillus stearothermophilus (Bacillus stearothermophilus), this protein is PTS system glucose-specific EIICBA component (ptsG).